The sequence spans 561 residues: Arf-GAP domain and FG repeat-containing protein 1 (561 aa).

In terms of domain architecture, Arf-GAP spans 11–135 (EKHLKMLRDM…WYVPPEQAKV (125 aa)). The C4-type zinc-finger motif lies at 29-52 (CFDCDQRGPTYVNMTVGSFVCTSC). S167 bears the Phosphoserine mark. The tract at residues 170–193 (ALHLNKGTPSQSPVVGRSQGQQQE) is disordered. Positions 176–191 (GTPSQSPVVGRSQGQQ) are enriched in polar residues. A Phosphothreonine modification is found at T177. Residues S181 and S362 each carry the phosphoserine modification. S367 is a glycosylation site (O-linked (GlcNAc) serine). The segment at 413 to 433 (SAQTQPASSGPAPFGATPSTN) is disordered.

In terms of assembly, interacts with FCHO1. Interacts with EPS15R and EPS15. O-glycosylated. In terms of tissue distribution, expressed in the testes (at protein level).

It is found in the nucleus. The protein resides in the cytoplasmic vesicle. In terms of biological role, required for vesicle docking or fusion during acrosome biogenesis. May play a role in RNA trafficking or localization. The sequence is that of Arf-GAP domain and FG repeat-containing protein 1 (Agfg1) from Mus musculus (Mouse).